We begin with the raw amino-acid sequence, 419 residues long: E3 ubiquitin-protein ligase RNF130 (419 aa).

The N-terminal stretch at 1 to 27 is a signal peptide; the sequence is MSGAARAGPARLAALALLTCSLWPTRA. Residues 28–194 lie on the Extracellular side of the membrane; the sequence is DNASQEYYTA…MPPKNFSRGS (167 aa). Residues asparagine 29, asparagine 40, asparagine 112, asparagine 135, asparagine 172, and asparagine 189 are each glycosylated (N-linked (GlcNAc...) asparagine). In terms of domain architecture, PA spans 105–176; that stretch reads IALLQRGNCT…SYLEKNISVQ (72 aa). Residues 195–217 form a helical membrane-spanning segment; that stretch reads LVFVSISFIVLMIISSAWLIFYF. The Cytoplasmic segment spans residues 218 to 419; the sequence is IQKIRYTNAR…SLNANEVEWF (202 aa). The RING-type zinc finger occupies 264-305; the sequence is CAVCIESYKQNDVVRVLPCKHVFHKSCVDPWLSEHCTCPMCK. The residue at position 341 (serine 341) is a Phosphoserine.

As to expression, in testis sections, expressed in interstitial tissue and seminiferous tubules. In tubules, expression is mainly in postmeiotic germ cells and to a much lesser extent in Sertoli cells (at protein level). Expressed at high levels in liver, lung, stomach, heart and thymus.

The protein localises to the membrane. Its subcellular location is the cytoplasm. It carries out the reaction S-ubiquitinyl-[E2 ubiquitin-conjugating enzyme]-L-cysteine + [acceptor protein]-L-lysine = [E2 ubiquitin-conjugating enzyme]-L-cysteine + N(6)-ubiquitinyl-[acceptor protein]-L-lysine.. It participates in protein modification; protein ubiquitination. Acts as an E3 ubiquitin-protein ligase. May have a role during the programmed cell death of hematopoietic cells. This is E3 ubiquitin-protein ligase RNF130 from Rattus norvegicus (Rat).